A 289-amino-acid polypeptide reads, in one-letter code: MNVGNISTAMITPFDSKGNVDFQKLSTLIDYLLKNGTDSLVVAGTTGESPTLSTEEKIALFEFTVKEVNGRVPVIAGTGSNNTKDSIKLTKKAEEAGVDCVMLVTPYYNKPSQEGMYRHFKAIAEETSLPVMLYNVPGRTVASLAPETAIRLAEIPNISAIKEASGDLDAITKIIAETPEDFYVYSGDDGLTLPILAVGGRGVVSVASHIVGSDMQQMIKNYTNGQTATAALIHQKLLPIMKELFKAPNPAPVKTALQLKGLDVGSVRLPLIPLNEDERLSLSSVISEL.

Residue Thr46 participates in pyruvate binding. Tyr134 (proton donor/acceptor) is an active-site residue. Catalysis depends on Lys162, which acts as the Schiff-base intermediate with substrate. Val204 serves as a coordination point for pyruvate.

Belongs to the DapA family. Homotetramer; dimer of dimers.

It localises to the cytoplasm. It carries out the reaction L-aspartate 4-semialdehyde + pyruvate = (2S,4S)-4-hydroxy-2,3,4,5-tetrahydrodipicolinate + H2O + H(+). It participates in amino-acid biosynthesis; L-lysine biosynthesis via DAP pathway; (S)-tetrahydrodipicolinate from L-aspartate: step 3/4. Catalyzes the condensation of (S)-aspartate-beta-semialdehyde [(S)-ASA] and pyruvate to 4-hydroxy-tetrahydrodipicolinate (HTPA). This chain is 4-hydroxy-tetrahydrodipicolinate synthase, found in Bacillus velezensis (strain DSM 23117 / BGSC 10A6 / LMG 26770 / FZB42) (Bacillus amyloliquefaciens subsp. plantarum).